A 349-amino-acid chain; its full sequence is Microfibril-associated glycoprotein 3 (349 aa).

The signal sequence occupies residues 1–21; sequence MKLHHCLSFLLVVTLVPAALS. Over 22–139 the chain is Extracellular; sequence LEDVAPLGAN…TLRVIFTSGD (118 aa). N-linked (GlcNAc...) asparagine glycosylation is found at asparagine 31, asparagine 36, asparagine 63, and asparagine 103. Residues 41 to 130 form the Ig-like C2-type domain; the sequence is PSFELSAGSY…SPARASYSVT (90 aa). Residues cysteine 68 and cysteine 117 are joined by a disulfide bond. A helical transmembrane segment spans residues 140–160; it reads MSVYYMVVCLIAFTITLILNV. The Cytoplasmic portion of the chain corresponds to 161 to 349; sequence TRLCLMSTHL…EGSIHHRVSI (189 aa). A disordered region spans residues 280-349; sequence NPELGRSNSP…EGSIHHRVSI (70 aa). A compositionally biased stretch (polar residues) spans 311-331; that stretch reads VHLQSETKSIGTDSQDSSHFS.

Post-translationally, glycosylated.

The protein resides in the cell membrane. Functionally, component of the elastin-associated microfibrils. This is Microfibril-associated glycoprotein 3 (Mfap3) from Mus musculus (Mouse).